The following is a 181-amino-acid chain: Inner membrane-spanning protein YciB (181 aa).

5 helical membrane-spanning segments follow: residues 19–39 (FFDI…QLIA), 50–70 (MHLI…IFHD), 80–100 (IVYA…KPIL), 118–138 (LTWY…YVAF), and 148–168 (FKVF…VVYL).

It belongs to the YciB family.

The protein resides in the cell inner membrane. Functionally, plays a role in cell envelope biogenesis, maintenance of cell envelope integrity and membrane homeostasis. This Shewanella amazonensis (strain ATCC BAA-1098 / SB2B) protein is Inner membrane-spanning protein YciB.